A 143-amino-acid chain; its full sequence is Large ribosomal subunit protein uL11 (143 aa).

Belongs to the universal ribosomal protein uL11 family. In terms of assembly, part of the ribosomal stalk of the 50S ribosomal subunit. Interacts with L10 and the large rRNA to form the base of the stalk. L10 forms an elongated spine to which 2 L12 dimers bind in a sequential fashion forming a pentameric L10(L12)2(L12)2 complex. Post-translationally, one or more lysine residues are methylated.

Forms part of the ribosomal stalk which helps the ribosome interact with GTP-bound translation factors. This is Large ribosomal subunit protein uL11 from Agrobacterium fabrum (strain C58 / ATCC 33970) (Agrobacterium tumefaciens (strain C58)).